The primary structure comprises 71 residues: Antitoxin VapB26 (71 aa).

In terms of biological role, antitoxin component of a type II toxin-antitoxin (TA) system. Upon expression in M.smegmatis neutralizes the effect of cognate toxin VapC26. The chain is Antitoxin VapB26 (vapB26) from Mycobacterium tuberculosis (strain ATCC 25618 / H37Rv).